A 159-amino-acid polypeptide reads, in one-letter code: Eukaryotic translation initiation factor 5A-4 (159 aa).

The segment covering 1–12 (MSDEEHQFESKA) has biased composition (basic and acidic residues). Positions 1-21 (MSDEEHQFESKADAGASKTYP) are disordered. K52 bears the Hypusine mark.

It belongs to the eIF-5A family. Lys-52 undergoes hypusination, a unique post-translational modification that consists in the addition of a butylamino group from spermidine to lysine side chain, leading to the formation of the unusual amino acid hypusine. eIF-5As are the only known proteins to undergo this modification, which is essential for their function.

Translation factor that promotes translation elongation and termination, particularly upon ribosome stalling at specific amino acid sequence contexts. Binds between the exit (E) and peptidyl (P) site of the ribosome and promotes rescue of stalled ribosome: specifically required for efficient translation of polyproline-containing peptides as well as other motifs that stall the ribosome. Acts as a ribosome quality control (RQC) cofactor by joining the RQC complex to facilitate peptidyl transfer during CAT tailing step. This chain is Eukaryotic translation initiation factor 5A-4 (EIF5A4), found in Solanum tuberosum (Potato).